Reading from the N-terminus, the 99-residue chain is MVTDMKCNRKRWSREDREFIEANVGKMTVEEMAEKLKVATTALRAHARRHGISLCVYRISEHDKYLCRELYKEGLDIHVIARKMELSNRAVSSIVYSGY.

It localises to the host cytoplasm. This is an uncharacterized protein from Escherichia phage Mu (Bacteriophage Mu).